Consider the following 204-residue polypeptide: Large ribosomal subunit protein uL4 (204 aa).

The segment at 44-76 (KRQGTQSAKTRSEVRGGGIKPWRQKGTGRARQG) is disordered.

Belongs to the universal ribosomal protein uL4 family. Part of the 50S ribosomal subunit.

Its function is as follows. One of the primary rRNA binding proteins, this protein initially binds near the 5'-end of the 23S rRNA. It is important during the early stages of 50S assembly. It makes multiple contacts with different domains of the 23S rRNA in the assembled 50S subunit and ribosome. Functionally, forms part of the polypeptide exit tunnel. This is Large ribosomal subunit protein uL4 from Clostridium perfringens (strain 13 / Type A).